The following is a 159-amino-acid chain: Membrane protein FAM174B (159 aa).

The N-terminal stretch at 1-27 (MRAALPPARLLPLLLLLALLGAPAARA) is a signal peptide. The segment at 28–73 (SRAQSAAPPQPGAERQPRPPPGPGPGNATGTGSGEAAGGGGSSNSS) is disordered. The Extracellular portion of the chain corresponds to 28–90 (SRAQSAAPPQ…ISSLLRDLHT (63 aa)). The span at 52 to 69 (PGNATGTGSGEAAGGGGS) shows a compositional bias: gly residues. N-linked (GlcNAc...) asparagine glycosylation is present at Asn54. Residues 91-111 (LKAAVIVACAFTAFLIACLLL) form a helical membrane-spanning segment. At 112 to 159 (RVFRSGKRLKKTRKYDIITTPAERVEMAPLNEEDDEDEDSTVFDIKYR) the chain is on the cytoplasmic side.

The protein belongs to the FAM174 family.

The protein resides in the cell membrane. It is found in the golgi apparatus. In terms of biological role, essential for Golgi structural integrity. The sequence is that of Membrane protein FAM174B (FAM174B) from Bos taurus (Bovine).